The primary structure comprises 350 residues: Chlorophyll a/b light-harvesting protein PcbA (350 aa).

Helical transmembrane passes span 26–46, 62–82, 87–107, 214–234, 248–268, and 309–329; these read LSAH…ITLF, LILI…GQVV, YFVI…GALY, IAVV…FPWA, LSAS…FSAV, and LCNV…WHAL.

It belongs to the PsbB/PsbC family. IsiA/Pcb subfamily. As to quaternary structure, the antenna complex consists of chlorophylls (a and b) and chlorophyll a/b binding proteins. Requires chlorophyll a as cofactor. The cofactor is chlorophyll b.

It localises to the cellular thylakoid membrane. The antenna complex functions as a light receptor, it captures and delivers excitation energy to photosystems II and I. The Prochlorales pcb genes are not related to higher plant LHCs. The chain is Chlorophyll a/b light-harvesting protein PcbA (pcbA) from Prochlorothrix hollandica.